The primary structure comprises 580 residues: CTP synthase (580 aa).

One can recognise a Glutamine amidotransferase type-1 domain in the interval 304–559 (NIILVGKYVS…VAASSGCLDE (256 aa)). Active-site for GATase activity residues include cysteine 403, histidine 532, and glutamate 534.

The protein belongs to the CTP synthase family.

It catalyses the reaction UTP + L-glutamine + ATP + H2O = CTP + L-glutamate + ADP + phosphate + 2 H(+). It participates in pyrimidine metabolism; CTP biosynthesis via de novo pathway; CTP from UDP: step 2/2. Catalyzes the ATP-dependent amination of UTP to CTP with either L-glutamine or ammonia as the source of nitrogen. The polypeptide is CTP synthase (URA7) (Gibberella zeae (strain ATCC MYA-4620 / CBS 123657 / FGSC 9075 / NRRL 31084 / PH-1) (Wheat head blight fungus)).